The following is a 558-amino-acid chain: Glucose-6-phosphate isomerase (558 aa).

Ala-2 carries the post-translational modification N-acetylalanine. Residue Lys-12 is modified to N6-acetyllysine. The residue at position 34 (Lys-34) is an N6-(2-hydroxyisobutyryl)lysine. Ser-107 is modified (phosphoserine). Thr-109 is subject to Phosphothreonine. Lys-142 carries the post-translational modification N6-acetyllysine. 159-160 lines the D-glucose 6-phosphate pocket; the sequence is GS. Ser-185 is subject to Phosphoserine; by CK2. A D-glucose 6-phosphate-binding site is contributed by 210–215; sequence SKTFTT. Position 250 is a phosphothreonine (Thr-250). D-glucose 6-phosphate-binding residues include Gln-354, Glu-358, and His-389. The active-site Proton donor is Glu-358. His-389 is a catalytic residue. At Lys-454 the chain carries N6-acetyllysine; alternate. Residue Lys-454 is modified to N6-malonyllysine; alternate. Lys-454 carries the post-translational modification N6-succinyllysine; alternate. A Phosphoserine modification is found at Ser-455. D-glucose 6-phosphate is bound at residue Lys-519. The active site involves Lys-519.

It belongs to the GPI family. As to quaternary structure, homodimer; in the catalytically active form. Monomer in the secreted form. Post-translationally, phosphorylation at Ser-185 by CK2 has been shown to decrease enzymatic activity and may contribute to secretion by a non-classical secretory pathway. ISGylated.

The protein resides in the cytoplasm. Its subcellular location is the secreted. It carries out the reaction alpha-D-glucose 6-phosphate = beta-D-fructose 6-phosphate. Its pathway is carbohydrate degradation; glycolysis; D-glyceraldehyde 3-phosphate and glycerone phosphate from D-glucose: step 2/4. Functionally, in the cytoplasm, catalyzes the conversion of glucose-6-phosphate to fructose-6-phosphate, the second step in glycolysis, and the reverse reaction during gluconeogenesis. Besides it's role as a glycolytic enzyme, also acts as a secreted cytokine: acts as an angiogenic factor (AMF) that stimulates endothelial cell motility. Acts as a neurotrophic factor, neuroleukin, for spinal and sensory neurons. It is secreted by lectin-stimulated T-cells and induces immunoglobulin secretion. The polypeptide is Glucose-6-phosphate isomerase (Macaca fascicularis (Crab-eating macaque)).